A 121-amino-acid chain; its full sequence is Ribonuclease P protein component (121 aa).

It belongs to the RnpA family. As to quaternary structure, consists of a catalytic RNA component (M1 or rnpB) and a protein subunit.

The enzyme catalyses Endonucleolytic cleavage of RNA, removing 5'-extranucleotides from tRNA precursor.. Its function is as follows. RNaseP catalyzes the removal of the 5'-leader sequence from pre-tRNA to produce the mature 5'-terminus. It can also cleave other RNA substrates such as 4.5S RNA. The protein component plays an auxiliary but essential role in vivo by binding to the 5'-leader sequence and broadening the substrate specificity of the ribozyme. The sequence is that of Ribonuclease P protein component from Rickettsia prowazekii (strain Madrid E).